A 220-amino-acid chain; its full sequence is UPF0502 protein CV_4303 (220 aa).

This sequence belongs to the UPF0502 family.

The chain is UPF0502 protein CV_4303 from Chromobacterium violaceum (strain ATCC 12472 / DSM 30191 / JCM 1249 / CCUG 213 / NBRC 12614 / NCIMB 9131 / NCTC 9757 / MK).